Here is a 574-residue protein sequence, read N- to C-terminus: ATP-grasp enzyme fsqD (574 aa).

The 229-residue stretch at Asn-234–Val-462 folds into the ATP-grasp domain. ATP is bound at residue Ala-263–Asp-318. Residues Glu-394, Glu-431, and Asn-433 each coordinate Mg(2+). Mn(2+) contacts are provided by Glu-394, Glu-431, and Asn-433.

Mg(2+) is required as a cofactor. The cofactor is Mn(2+).

Its pathway is secondary metabolite biosynthesis. In terms of biological role, ATP-grasp enzyme; part of the gene cluster that mediates the biosynthesis of the isoquinoline alkaloids fumisoquin A, fumisoquin B and fumisoquin C; as well as small amounts of fumipyrrole as a shunt metabolite. The products of the cluster lead to a brown coloration and are important for growth and conidiation. The nonribosomal peptide synthetase-like protein fsqF, which lacks a canonical condensation domain, is required for addition of a serine-derived dehydroalanine moiety to activated tyrosine but is not essential for the subsequent steps leading to isoquinoline formation. A different enzyme, most likely the ATP-grasp enzyme fsqD, is responsible for activation of tyrosine. Three additional enzymes encoded by the fsq cluster, the N-methyltransferase fsqC, the phenol 2-monooxygenase fsqG and the FAD-dependent oxidase fsqB, catalyze the formation of the isoquinoline ring system in the fumisoquins. FsqB converts the fspF thiolation domain-bound (2S,4S,5S)-2-amino-6-(3,4-dihydroxyphenyl)-4-hydroxy-5-(methylamino)hexanoyl into isoquinoline. The cyclization most likely proceeds via a two-step mechanism, beginning with FAD-dependent oxidation of the methyl group to an iminium species followed by electrophilic attack on the deprotonated phenol. The protein is ATP-grasp enzyme fsqD of Aspergillus fumigatus (strain ATCC MYA-4609 / CBS 101355 / FGSC A1100 / Af293) (Neosartorya fumigata).